A 638-amino-acid chain; its full sequence is Chaperone protein DnaK (638 aa).

Phosphothreonine; by autocatalysis is present on Thr200. A disordered region spans residues 599–623; that stretch reads LHMAATAEQQSASTGAGAGSSAKVD. The span at 609–620 shows a compositional bias: low complexity; that stretch reads SASTGAGAGSSA.

Belongs to the heat shock protein 70 family.

Acts as a chaperone. This chain is Chaperone protein DnaK, found in Xylella fastidiosa (strain M12).